The sequence spans 195 residues: Inhibitor of glycogen debranching 1 (195 aa).

The segment covering 1–18 (MTDPHLNTPQVSTSPTFE) has biased composition (polar residues). Residues 1–101 (MTDPHLNTPQ…ERRSSGPMDF (101 aa)) form a disordered region. Phosphoserine is present on Ser-64. Thr-65 bears the Phosphothreonine mark. A compositionally biased stretch (basic and acidic residues) spans 75–95 (EQARERESSIGEHAPGAERRS). Residues Ser-95 and Ser-96 each carry the phosphoserine modification. Thr-132 is subject to Phosphothreonine. The interval 146–175 (NSYLDNNSNGNSARVPHGSPPQLGTRRKSS) is disordered. The span at 148 to 157 (YLDNNSNGNS) shows a compositional bias: polar residues. At Ser-164 the chain carries Phosphoserine.

As to quaternary structure, interacts with GDB1.

Its subcellular location is the cytoplasm. Acts as an inhibitor of GDB1, enhancing the ability of cells to store glucose as glycogen. In Saccharomyces cerevisiae (strain ATCC 204508 / S288c) (Baker's yeast), this protein is Inhibitor of glycogen debranching 1 (IGD1).